Reading from the N-terminus, the 130-residue chain is uncharacterized protein (130 aa).

This is an uncharacterized protein from Saccharomyces cerevisiae (strain ATCC 204508 / S288c) (Baker's yeast).